Here is a 564-residue protein sequence, read N- to C-terminus: 4-coumarate--CoA ligase 1 (564 aa).

Residues Ser-209, Ser-210, Gly-211, Thr-212, Thr-213, and Lys-217 each contribute to the ATP site. (E)-4-coumaroyl-AMP-binding residues include Tyr-259 and Thr-263. Position 280 (Arg-280) interacts with CoA. The interval 282–351 (DLAAMMDLVE…AKLPGAVLGQ (70 aa)) is SBD1. The (E)-4-coumaroyl-AMP site is built by Ala-329, Gln-351, Gly-352, Thr-356, and Met-364. 3 residues coordinate ATP: Gln-351, Gly-352, and Thr-356. The interval 352 to 419 (GYGMTEAGPV…IRGQQIMKGY (68 aa)) is SBD2. Residues Asp-440 and Arg-455 each coordinate ATP. (E)-4-coumaroyl-AMP contacts are provided by Lys-457 and Lys-461. CoA contacts are provided by Arg-463 and Gly-464. Lys-547 is an ATP binding site.

This sequence belongs to the ATP-dependent AMP-binding enzyme family. Mg(2+) serves as cofactor. In terms of tissue distribution, expressed in roots, stems, leaf blades and leaf sheaths.

The catalysed reaction is (E)-ferulate + ATP + CoA = (E)-feruloyl-CoA + AMP + diphosphate. The enzyme catalyses (E)-4-coumarate + ATP + CoA = (E)-4-coumaroyl-CoA + AMP + diphosphate. It carries out the reaction (E)-cinnamate + ATP + CoA = (E)-cinnamoyl-CoA + AMP + diphosphate. It catalyses the reaction (E)-caffeate + ATP + CoA = (E)-caffeoyl-CoA + AMP + diphosphate. The catalysed reaction is (E)-ferulate + ATP + H(+) = (E)-feruloyl-AMP + diphosphate. The enzyme catalyses (E)-feruloyl-AMP + CoA = (E)-feruloyl-CoA + AMP + H(+). It carries out the reaction (E)-4-coumarate + ATP + H(+) = (E)-4-coumaroyl-AMP + diphosphate. It catalyses the reaction (E)-4-coumaroyl-AMP + CoA = (E)-4-coumaroyl-CoA + AMP + H(+). The catalysed reaction is (E)-caffeate + ATP + H(+) = (E)-caffeoyl-AMP + diphosphate. The enzyme catalyses (E)-caffeoyl-AMP + CoA = (E)-caffeoyl-CoA + AMP + H(+). The protein operates within phytoalexin biosynthesis; 3,4',5-trihydroxystilbene biosynthesis; 3,4',5-trihydroxystilbene from trans-4-coumarate: step 1/2. Involved in the phenylpropanoid metabolism by mediating the activation of a number of hydroxycinnamates for the biosynthesis of monolignols and other phenolic secondary metabolites. Catalyzes the formation of CoA esters of cinnamate, 4-coumarate, caffeate and ferulate. Is more efficient with substrates in the following order: ferulate &gt; 4-coumarate &gt; cinnamate &gt; caffeate. Cannot convert sinapate to its corresponding CoA ester. Follows a two-step reaction mechanism, wherein the carboxylate substrate first undergoes adenylation by ATP, followed by a thioesterification in the presence of CoA to yield the final CoA thioester. The chain is 4-coumarate--CoA ligase 1 from Oryza sativa subsp. japonica (Rice).